We begin with the raw amino-acid sequence, 646 residues long: Peptidylprolyl isomerase domain and WD repeat-containing protein 1 (646 aa).

The segment at 1–30 is disordered; the sequence is MAAESGSDFQQRRRRRRDPEEPEKTELSER. Residue Ala2 is modified to N-acetylalanine. Positions 17 to 30 are enriched in basic and acidic residues; that stretch reads RDPEEPEKTELSER. 4 WD repeats span residues 88–126, 131–170, 221–260, and 278–319; these read MHRD…IEFV, SHLG…MINM, LHTS…YKFP, and KCKA…RVFD. Over residues 455 to 478 the composition is skewed to basic and acidic residues; that stretch reads EPEDTKSADSDRDVFNEKPSKEEV. Residues 455 to 490 form a disordered region; sequence EPEDTKSADSDRDVFNEKPSKEEVMAATQAEGPKRV. Residues 490–645 form the PPIase cyclophilin-type domain; that stretch reads VSDSAIIHTS…EDVSIINITV (156 aa).

This sequence belongs to the cyclophilin-type PPIase family. PPIL1 subfamily. In terms of assembly, identified in the spliceosome C complex.

It localises to the nucleus. It carries out the reaction [protein]-peptidylproline (omega=180) = [protein]-peptidylproline (omega=0). Inhibited by cyclosporin A (CsA). In terms of biological role, PPIase that catalyzes the cis-trans isomerization of proline imidic peptide bonds in oligopeptides and may therefore assist protein folding. May be involved in pre-mRNA splicing. The chain is Peptidylprolyl isomerase domain and WD repeat-containing protein 1 from Pongo abelii (Sumatran orangutan).